The following is a 176-amino-acid chain: NADH:riboflavin 5'-phosphate oxidoreductase (176 aa).

Provides the reduced form of flavin mononucleotide for the PIIA synthase reaction. The protein is NADH:riboflavin 5'-phosphate oxidoreductase (snaC) of Streptomyces pristinaespiralis.